We begin with the raw amino-acid sequence, 3142 residues long: Huntingtin (3142 aa).

The interval 3–13 is sufficient for interaction with TPR; sequence TLEKLMKAFES. The residue at position 9 (K9) is an N6-acetyllysine. The disordered stretch occupies residues 14–85; that stretch reads LKSFQQQQQQ…PGPAVAEEPL (72 aa). A compositionally biased stretch (low complexity) spans 18–37; the sequence is QQQQQQQQQQQQQQQQQQQQ. Residues 38–78 are compositionally biased toward pro residues; it reads QPPPPPPPPPPPQLPQPPPQAQPLLPQPQPPPPPPPPPPGP. N6-acetyllysine is present on residues K176 and K234. HEAT repeat units follow at residues 204-241, 246-283, and 316-360; these read PYLVNLLPCLTRTSKRPEESVQETLAAAVPKIMASFGN, NEIKVLLKAFIANLKSSSPTIRRTAAGSAVSICQHSRR, and LTLR…VYEL. K343 bears the N6-acetyllysine mark. 4 positions are modified to phosphoserine: S411, S417, S419, and S432. An N6-acetyllysine modification is found at K442. The tract at residues 447–469 is disordered; it reads EEEALEDDSESRSDVSSSALTAS. The tract at residues 491–502 is interaction with ZDHHC17; the sequence is GHDIITEQPRSQ. A disordered region spans residues 517 to 583; it reads LTSSATDGDE…TPSDSSEIVL (67 aa). The segment covering 531-545 has biased composition (low complexity); it reads SHSSSQVSAVPSDPA. Residues 550–579 show a composition bias toward polar residues; sequence DGTQASSPISDSSQTTTEGPDSAVTPSDSS. G551 carries N-myristoyl glycine lipidation. 2 positions are modified to phosphoserine: S640 and S643. 2 HEAT repeats span residues 802-839 and 902-940; these read FSLADCIPLLRKTLKDESSVTCKLACTAVRNCVMSLCS and KLQERVLNNVVIHLLGDEDPRVRHVAAASLIRLVPKLFY. The tract at residues 1176-1225 is disordered; it reads PSLSPIRRKGKEKEPGEQASVPLSPKKGSEASAASRQSDTSGPVTTSKSS. Phosphoserine; by CDK5 occurs at positions 1179 and 1199. Polar residues predominate over residues 1207–1225; that stretch reads SAASRQSDTSGPVTTSKSS. Phosphoserine is present on residues S1870 and S1874. The interval 2330–2351 is disordered; that stretch reads ERRTNTPKAISEEEEEVDPNTQ. The Nuclear export signal motif lies at 2395–2404; it reads IIISLARLPL. The segment at 2633–2662 is disordered; sequence EEEWDEEEEEEADAPAPSSPPTSPVNSRKH. The segment covering 2634-2645 has biased composition (acidic residues); the sequence is EEWDEEEEEEAD.

The protein belongs to the huntingtin family. As to quaternary structure, interacts with PFN1. Interacts through its N-terminus with PRPF40A. Interacts with PQBP1. Interacts with SETD2. Interacts with SH3GLB1. Interacts with SYVN. Interacts with TPR; the interaction is inhibited by forms of Huntingtin with expanded polyglutamine stretch. Interacts with ZDHHC13 (via ANK repeats). Interacts with ZDHHC17 (via ANK repeats). Interacts with F8A1/F8A2/F8A3. Found in a complex with F8A1/F8A2/F8A3, HTT and RAB5A; mediates the recruitment of HTT by RAB5A. In terms of processing, cleaved by caspases downstream of the polyglutamine stretch. The resulting N-terminal fragments are cytotoxic and provokes apoptosis. Forms with expanded polyglutamine expansion are specifically ubiquitinated by SYVN1, which promotes their proteasomal degradation. Post-translationally, phosphorylation at Ser-1179 and Ser-1199 by CDK5 in response to DNA damage in nuclei of neurons protects neurons against polyglutamine expansion as well as DNA damage mediated toxicity. In terms of processing, myristoylated at Gly-551, following proteolytic cleavage at Asp-550. In terms of tissue distribution, expressed in the brain cortex (at protein level). Widely expressed with the highest level of expression in the brain (nerve fibers, varicosities, and nerve endings). In the brain, the regions where it can be mainly found are the cerebellar cortex, the neocortex, the striatum, and the hippocampal formation.

Its subcellular location is the cytoplasm. The protein resides in the nucleus. It is found in the early endosome. The protein localises to the cytoplasmic vesicle. It localises to the autophagosome. May play a role in microtubule-mediated transport or vesicle function. Functionally, promotes the formation of autophagic vesicles. This is Huntingtin (HTT) from Homo sapiens (Human).